Here is a 255-residue protein sequence, read N- to C-terminus: NAP1-related protein 2 (255 aa).

Residues 19–60 (IDAELVLSIEKLQEIQDDLEKINEKASDEVLEVEQKYNVIRK) are a coiled coil. Positions 213-255 (NPLTYFNNDADEEDFDGDDDGDEEEKEGDSDEDDDEEDEVGEE) are disordered. A compositionally biased stretch (acidic residues) spans 221–255 (DADEEDFDGDDDGDEEEKEGDSDEDDDEEDEVGEE).

The protein belongs to the nucleosome assembly protein (NAP) family. In terms of assembly, can form homomeric and heteromeric protein complexes with NRP1. Binds histones H2A and H2B and associates with chromatin in vivo. In terms of tissue distribution, ubiquitous.

It is found in the cytoplasm. It localises to the nucleus. Acts as a histone H2A/H2B chaperone in nucleosome assembly, playing a critical role for the correct expression of genes involved in root proliferation and patterning. Required with NRP1 for the maintenance of cell proliferation and differentiation in postembryonic root growth. Involved in both intramolecular and intermolecular somatic homologous recombination. In Arabidopsis thaliana (Mouse-ear cress), this protein is NAP1-related protein 2 (NRP2).